A 279-amino-acid polypeptide reads, in one-letter code: Protein COP1 SUPPRESSOR 2 (279 aa).

Disordered regions lie at residues 1-29 (MPPK…ISEE) and 57-79 (SSTA…EGEK). The span at 68 to 79 (KPVEKTETEGEK) shows a compositional bias: basic and acidic residues. Residues 86 to 183 (DTFAQETAVL…EETEAAKKLL (98 aa)) adopt a coiled-coil conformation. The span at 217–229 (LRREHPELYKDRG) shows a compositional bias: basic and acidic residues. The tract at residues 217–279 (LRREHPELYK…KRERNRVMRR (63 aa)) is disordered. Over residues 250–260 (ADSGKSRQAAT) the composition is skewed to polar residues. Residues 270 to 279 (KRERNRVMRR) show a composition bias toward basic residues.

Belongs to the TLS1 family. Interacts with COP1.

It is found in the nucleus. Its subcellular location is the nucleus speckle. Inhibits E3 ubiquitin-protein ligase activity of COP1, a central repressor of seedling photomorphogenesis. Represses COP1-mediated turnover of HY5 in the dark. Required for primary root development under normal light growth conditions. This is Protein COP1 SUPPRESSOR 2 from Arabidopsis thaliana (Mouse-ear cress).